The sequence spans 250 residues: Proteasome subunit alpha type-4 (250 aa).

The protein belongs to the peptidase T1A family. As to quaternary structure, the 26S proteasome consists of a 20S proteasome core and two 19S regulatory subunits. The 20S proteasome core is composed of 28 subunits that are arranged in four stacked rings, resulting in a barrel-shaped structure. The two end rings are each formed by seven alpha subunits, and the two central rings are each formed by seven beta subunits. The catalytic chamber with the active sites is on the inside of the barrel.

The protein localises to the cytoplasm. The protein resides in the nucleus. Its function is as follows. The proteasome is a multicatalytic proteinase complex which is characterized by its ability to cleave peptides with Arg, Phe, Tyr, Leu, and Glu adjacent to the leaving group at neutral or slightly basic pH. The proteasome has an ATP-dependent proteolytic activity. The protein is Proteasome subunit alpha type-4 (PAC1) of Spinacia oleracea (Spinach).